The following is an 809-amino-acid chain: Phenylalanine--tRNA ligase beta subunit (809 aa).

Residues 39-153 (APPFSQIVVG…EDTPVGADIR (115 aa)) enclose the tRNA-binding domain. A B5 domain is found at 404–479 (PKREPVRMRV…RIYGFEQIPA (76 aa)). 4 residues coordinate Mg(2+): Asp-457, Asp-463, Glu-466, and Glu-467. The FDX-ACB domain occupies 706-808 (PRVPAVTRDI…AGDAFGARLR (103 aa)).

Belongs to the phenylalanyl-tRNA synthetase beta subunit family. Type 1 subfamily. Tetramer of two alpha and two beta subunits. Mg(2+) is required as a cofactor.

The protein localises to the cytoplasm. It catalyses the reaction tRNA(Phe) + L-phenylalanine + ATP = L-phenylalanyl-tRNA(Phe) + AMP + diphosphate + H(+). The polypeptide is Phenylalanine--tRNA ligase beta subunit (Ralstonia nicotianae (strain ATCC BAA-1114 / GMI1000) (Ralstonia solanacearum)).